The sequence spans 355 residues: Protein RecA (355 aa).

Gly67–Thr74 is a binding site for ATP.

The protein belongs to the RecA family.

It is found in the cytoplasm. Can catalyze the hydrolysis of ATP in the presence of single-stranded DNA, the ATP-dependent uptake of single-stranded DNA by duplex DNA, and the ATP-dependent hybridization of homologous single-stranded DNAs. It interacts with LexA causing its activation and leading to its autocatalytic cleavage. The protein is Protein RecA of Shewanella amazonensis (strain ATCC BAA-1098 / SB2B).